A 388-amino-acid chain; its full sequence is Succinate--CoA ligase [ADP-forming] subunit beta (388 aa).

Residues 9-244 (KDLLSSYDIA…PSQENVRDVL (236 aa)) form the ATP-grasp domain. ATP-binding positions include K46, 53–55 (GRG), V102, and E107. N199 and D213 together coordinate Mg(2+). Residues N264 and 321–323 (GIM) each bind substrate.

Belongs to the succinate/malate CoA ligase beta subunit family. As to quaternary structure, heterotetramer of two alpha and two beta subunits. Mg(2+) serves as cofactor.

It carries out the reaction succinate + ATP + CoA = succinyl-CoA + ADP + phosphate. The catalysed reaction is GTP + succinate + CoA = succinyl-CoA + GDP + phosphate. It functions in the pathway carbohydrate metabolism; tricarboxylic acid cycle; succinate from succinyl-CoA (ligase route): step 1/1. Functionally, succinyl-CoA synthetase functions in the citric acid cycle (TCA), coupling the hydrolysis of succinyl-CoA to the synthesis of either ATP or GTP and thus represents the only step of substrate-level phosphorylation in the TCA. The beta subunit provides nucleotide specificity of the enzyme and binds the substrate succinate, while the binding sites for coenzyme A and phosphate are found in the alpha subunit. The chain is Succinate--CoA ligase [ADP-forming] subunit beta from Chlamydia felis (strain Fe/C-56) (Chlamydophila felis).